A 261-amino-acid chain; its full sequence is Protein TfpB (261 aa).

This Moraxella bovis protein is Protein TfpB (tfpB).